We begin with the raw amino-acid sequence, 193 residues long: Corrinoid adenosyltransferase (193 aa).

ATP contacts are provided by residues 10–18, Lys-28, 137–142, and Asn-163; these read TRTGDDGTT and RRAERS.

The protein belongs to the Cob(I)alamin adenosyltransferase family.

Its subcellular location is the cytoplasm. The enzyme catalyses 2 cob(II)yrinate a,c diamide + reduced [electron-transfer flavoprotein] + 2 ATP = 2 adenosylcob(III)yrinate a,c-diamide + 2 triphosphate + oxidized [electron-transfer flavoprotein] + 3 H(+). It catalyses the reaction 2 cob(II)alamin + reduced [electron-transfer flavoprotein] + 2 ATP = 2 adenosylcob(III)alamin + 2 triphosphate + oxidized [electron-transfer flavoprotein] + 3 H(+). It participates in cofactor biosynthesis; adenosylcobalamin biosynthesis; adenosylcobalamin from cob(II)yrinate a,c-diamide: step 2/7. In Mycobacterium bovis (strain ATCC BAA-935 / AF2122/97), this protein is Corrinoid adenosyltransferase.